Here is a 308-residue protein sequence, read N- to C-terminus: Ribosomal RNA small subunit methyltransferase A (308 aa).

Residues Asn-35, Val-37, Gly-62, Glu-83, Asp-113, and Asn-136 each coordinate S-adenosyl-L-methionine.

The protein belongs to the class I-like SAM-binding methyltransferase superfamily. rRNA adenine N(6)-methyltransferase family. RsmA subfamily.

It is found in the cytoplasm. It carries out the reaction adenosine(1518)/adenosine(1519) in 16S rRNA + 4 S-adenosyl-L-methionine = N(6)-dimethyladenosine(1518)/N(6)-dimethyladenosine(1519) in 16S rRNA + 4 S-adenosyl-L-homocysteine + 4 H(+). Its function is as follows. Specifically dimethylates two adjacent adenosines (A1518 and A1519) in the loop of a conserved hairpin near the 3'-end of 16S rRNA in the 30S particle. May play a critical role in biogenesis of 30S subunits. The protein is Ribosomal RNA small subunit methyltransferase A of Bifidobacterium longum (strain NCC 2705).